A 137-amino-acid chain; its full sequence is 2-iminobutanoate/2-iminopropanoate deaminase (137 aa).

Serine 2 is modified (N-acetylserine). An N6-succinyllysine mark is found at lysine 13, lysine 60, and lysine 67. Threonine 74 carries the phosphothreonine modification. Serine 136 bears the Phosphoserine mark.

This sequence belongs to the RutC family. In terms of assembly, homotrimer. Interacts with YTHDF2. As to expression, expressed predominantly in liver and kidney. Lower levels in lung and brain.

It localises to the cytoplasm. The protein resides in the nucleus. Its subcellular location is the peroxisome. The protein localises to the mitochondrion. It catalyses the reaction 2-iminobutanoate + H2O = 2-oxobutanoate + NH4(+). The catalysed reaction is 2-iminopropanoate + H2O = pyruvate + NH4(+). In terms of biological role, catalyzes the hydrolytic deamination of enamine/imine intermediates that form during the course of normal metabolism. May facilitate the release of ammonia from these potentially toxic reactive metabolites, reducing their impact on cellular components. It may act on enamine/imine intermediates formed by several types of pyridoxal-5'-phosphate-dependent dehydratases including L-threonine dehydratase. Also promotes endoribonucleolytic cleavage of some transcripts by promoting recruitment of the ribonuclease P/MRP complex. Acts by bridging YTHDF2 and the ribonuclease P/MRP complex. RIDA/HRSP12 binds to N6-methyladenosine (m6A)-containing mRNAs containing a 5'-GGUUC-3' motif: cooperative binding of RIDA/HRSP12 and YTHDF2 to such transcripts lead to recruitment of the ribonuclease P/MRP complex and subsequent endoribonucleolytic cleavage. In Homo sapiens (Human), this protein is 2-iminobutanoate/2-iminopropanoate deaminase.